A 57-amino-acid chain; its full sequence is Preprotein translocase subunit SecG (57 aa).

The Cytoplasmic segment spans residues 1–33 (MARRRKYEGLNPFVAAGLIKFSEEGELERIKLN). Residues 34-55 (PRTAILVSITVIIAILVLNILH) traverse the membrane as a helical segment. Residues 56 to 57 (PL) lie on the Extracellular side of the membrane.

This sequence belongs to the SEC61-beta family. In terms of assembly, component of the protein translocase complex. Heterotrimer consisting of alpha (SecY), beta (SecG) and gamma (SecE) subunits. Can form oligomers of the heterotrimer.

The protein localises to the cell membrane. Its function is as follows. Involved in protein export. The function of the beta subunit is unknown, but it may be involved in stabilization of the trimeric complex. This chain is Preprotein translocase subunit SecG, found in Pyrobaculum islandicum (strain DSM 4184 / JCM 9189 / GEO3).